Consider the following 783-residue polypeptide: Tricorn protease-interacting factor F2 (783 aa).

Substrate-binding positions include E107 and 236–240 (GAMEN). H271 contributes to the Zn(2+) binding site. E272 serves as the catalytic Proton acceptor. H275 and E294 together coordinate Zn(2+).

The protein belongs to the peptidase M1 family. Monomer. Part of the Tricorn proteolytic complex. Zn(2+) is required as a cofactor.

The protein resides in the cytoplasm. Functionally, proteases F1, F2 and F3 degrade oligopeptides produced by Tricorn (themselves probably produced by the proteasome), yielding free amino acids. This Thermoplasma acidophilum (strain ATCC 25905 / DSM 1728 / JCM 9062 / NBRC 15155 / AMRC-C165) protein is Tricorn protease-interacting factor F2 (trf2).